The primary structure comprises 167 residues: Ribosome maturation factor RimM (167 aa).

The PRC barrel domain occupies 94–166 (DDRAWLHELE…YIHVPRFDEF (73 aa)).

This sequence belongs to the RimM family. Binds ribosomal protein uS19.

The protein localises to the cytoplasm. Its function is as follows. An accessory protein needed during the final step in the assembly of 30S ribosomal subunit, possibly for assembly of the head region. Essential for efficient processing of 16S rRNA. May be needed both before and after RbfA during the maturation of 16S rRNA. It has affinity for free ribosomal 30S subunits but not for 70S ribosomes. In Chlorobium luteolum (strain DSM 273 / BCRC 81028 / 2530) (Pelodictyon luteolum), this protein is Ribosome maturation factor RimM.